A 188-amino-acid chain; its full sequence is UPF0301 protein PD_1276 (188 aa).

It belongs to the UPF0301 (AlgH) family.

In Xylella fastidiosa (strain Temecula1 / ATCC 700964), this protein is UPF0301 protein PD_1276.